The sequence spans 134 residues: Cytochrome b5 isoform B (134 aa).

The Cytochrome b5 heme-binding domain maps to 5-81 (AKIFTLSEVS…MEQYYVGEID (77 aa)). Heme is bound by residues His-40 and His-64. The helical transmembrane segment at 107–127 (FIIKLLQFLVPLAILGLAVGI) threads the bilayer.

The protein belongs to the cytochrome b5 family. As to quaternary structure, interacts with CER1, FAH1, FAH2 and BI-1.

Its subcellular location is the endoplasmic reticulum membrane. Its function is as follows. Membrane bound hemoprotein which function as an electron carrier for several membrane bound oxygenases, including fatty acid desaturases. The polypeptide is Cytochrome b5 isoform B (Arabidopsis thaliana (Mouse-ear cress)).